The chain runs to 291 residues: Phosphatidylcholine-sterol acyltransferase (291 aa).

The N-linked (GlcNAc...) asparagine glycan is linked to Asn-28. Residue Ser-125 is the Nucleophile of the active site. Asn-179 carries N-linked (GlcNAc...) asparagine glycosylation. Cys-220 and Cys-263 form a disulfide bridge. Catalysis depends on Asp-252, which acts as the Charge relay system. Asn-280 carries N-linked (GlcNAc...) asparagine glycosylation.

This sequence belongs to the AB hydrolase superfamily. Lipase family.

The protein localises to the secreted. The catalysed reaction is a sterol + a 1,2-diacyl-sn-glycero-3-phosphocholine = a sterol ester + a 1-acyl-sn-glycero-3-phosphocholine. With respect to regulation, APOA1 is the most potent activator in plasma. Also activated by APOE, APOC1 and APOA4. Its function is as follows. Central enzyme in the extracellular metabolism of plasma lipoproteins. Synthesized mainly in the liver and secreted into plasma where it converts cholesterol and phosphatidylcholines (lecithins) to cholesteryl esters and lysophosphatidylcholines on the surface of high and low density lipoproteins (HDLs and LDLs). The cholesterol ester is then transported back to the liver. Has a preference for plasma 16:0-18:2 or 18:O-18:2 phosphatidylcholines. Also produced in the brain by primary astrocytes, and esterifies free cholesterol on nascent APOE-containing lipoproteins secreted from glia and influences cerebral spinal fluid (CSF) APOE- and APOA1 levels. Together with APOE and the cholesterol transporter ABCA1, plays a key role in the maturation of glial-derived, nascent lipoproteins. Required for remodeling high-density lipoprotein particles into their spherical forms. The sequence is that of Phosphatidylcholine-sterol acyltransferase (LCAT) from Myodes glareolus (Bank vole).